The primary structure comprises 919 residues: MATIAAAAFEALMDGVTCWDVPRGPIPSELLLIGEAAFPVMVNDKGQVLIAASSYGRGRLVVVSHEGYLSHTGLAPFLLNAVSWLCPCPGAPVGVHPSLAPLVNILQDAGLEAQVKPEPGEPLGVYCINAYNDTLTATLIQFVKHGGGLLIGGQAWYWASQHGPDKVLSRFPGNKVTSVAGVYFTDTYGDRDRFKVSKKVPKIPLHVRYGEDVRQDQQQLLEGISELDIRTGGVPSQLLVHGALAFPLGLDASLNCFLAAAHYGRGRVVLAAHECLLCAPKMGPFLLNAVRWLARGQTGKVGVNTNLKDLCPLLSEHGLQCSLEPHLNSDLCVYCCKAYSDKEAKQLQEFVAEGGGLLIGGQAWWWASQNPGHCPLAGFPGNIILNCFGLSILPQTLKAGCFPVPTPEMRSYHFRKALSQFQAILNHENGNLEKSCLAKLRVDGAAFLQIPAEGVPAYISLHRLLRKMLRGSGLPAVSRENPVASDSYEAAVLSLATGLAHSGTDCSQLAQGLGTWTCSSSLYPSKHPITVEINGINPGNNDCWVSTGLYLLEGQNAEVSLSEAAASAGLRVQIGCHTDDLTKARKLSRAPVVTHQCWMDRTERSVSCLWGGLLYVIVPKGSQLGPVPVTIRGAVPAPYYKLGKTSLEEWKRQMQENLAPWGELATDNIILTVPTTNLQALKDPEPVLRLWDEMMQAVARLAAEPFPFRRPERIVADVQISAGWMHSGYPIMCHLESVKEIINEMDMRSRGVWGPIHELGHNQQRHGWEFPPHTTEATCNLWSVYVHETVLGIPRAQAHEALSPPERERRIKAHLGKGAPLCDWNVWTALETYLQLQEAFGWEPFTQLFAEYQTLSHLPKDNTGRMNLWVKKFSEKVKKNLVPFFEAWGWPIQKEVADSLASLPEWQENPMQVYLRARK.

Residues 542 to 841 (DCWVSTGLYL…TYLQLQEAFG (300 aa)) enclose the Peptidase M60 domain.

Belongs to the TCAF family. Isoform 2 interacts with TRPM8 (via N-terminus and C-terminus domains); the interaction inhibits TRPM8 channel activity. Interacts with TRPV6. Isoform 2 is expressed in the prostate and in cancerous prostate samples.

The protein resides in the cell membrane. Functionally, negatively regulates the plasma membrane cation channel TRPM8 activity. Involved in the recruitment of TRPM8 to the cell surface. Promotes prostate cancer cell migration stimulation in a TRPM8-dependent manner. This Homo sapiens (Human) protein is TRPM8 channel-associated factor 2.